The chain runs to 230 residues: Oxaloacetate tautomerase FAHD1, mitochondrial (230 aa).

Residues 1 to 26 (MAAAAAAAAQRLLAASTKIIGVGRNY) constitute a mitochondrion transit peptide. Positions 73, 75, and 104 each coordinate Mg(2+).

It belongs to the FAH family. It depends on Mg(2+) as a cofactor. The cofactor is Mn(2+).

The protein localises to the mitochondrion. The catalysed reaction is oxaloacetate = enol-oxaloacetate. Tautomerase that converts enol-oxaloacetate, a strong inhibitor of succinate dehydrogenase, to the physiological keto form of oxaloacetate. The protein is Oxaloacetate tautomerase FAHD1, mitochondrial of Oryza sativa subsp. japonica (Rice).